The primary structure comprises 368 residues: Phospho-N-acetylmuramoyl-pentapeptide-transferase (368 aa).

10 helical membrane passes run 31 to 51 (LTSM…LYGL), 73 to 93 (TMGG…WGNL), 98 to 118 (VILL…DDYM), 134 to 154 (FILS…YTGT), 175 to 195 (GPVI…IIGS), 213 to 233 (VLIS…PIVA), 249 to 269 (VFLS…AHPA), 271 to 291 (VFMG…IVIL), 296 to 316 (ILLL…ILQV), and 345 to 365 (KIVI…LSTL).

It belongs to the glycosyltransferase 4 family. MraY subfamily. Mg(2+) serves as cofactor.

It localises to the cell inner membrane. The enzyme catalyses UDP-N-acetyl-alpha-D-muramoyl-L-alanyl-gamma-D-glutamyl-meso-2,6-diaminopimeloyl-D-alanyl-D-alanine + di-trans,octa-cis-undecaprenyl phosphate = di-trans,octa-cis-undecaprenyl diphospho-N-acetyl-alpha-D-muramoyl-L-alanyl-D-glutamyl-meso-2,6-diaminopimeloyl-D-alanyl-D-alanine + UMP. It participates in cell wall biogenesis; peptidoglycan biosynthesis. Catalyzes the initial step of the lipid cycle reactions in the biosynthesis of the cell wall peptidoglycan: transfers peptidoglycan precursor phospho-MurNAc-pentapeptide from UDP-MurNAc-pentapeptide onto the lipid carrier undecaprenyl phosphate, yielding undecaprenyl-pyrophosphoryl-MurNAc-pentapeptide, known as lipid I. This chain is Phospho-N-acetylmuramoyl-pentapeptide-transferase, found in Leptospira interrogans serogroup Icterohaemorrhagiae serovar copenhageni (strain Fiocruz L1-130).